Reading from the N-terminus, the 362-residue chain is Peptide chain release factor 1 (362 aa).

Gln-235 is subject to N5-methylglutamine.

Belongs to the prokaryotic/mitochondrial release factor family. Post-translationally, methylated by PrmC. Methylation increases the termination efficiency of RF1.

The protein localises to the cytoplasm. Its function is as follows. Peptide chain release factor 1 directs the termination of translation in response to the peptide chain termination codons UAG and UAA. In Acinetobacter baumannii (strain ACICU), this protein is Peptide chain release factor 1.